The sequence spans 369 residues: MSTIMQKIKEIEDEMAKTQKNKATSHHLGLLKAKLAKLRRDLLAPPTKGGGGGAGEGFDVTKSGDSRVGLVGFPSVGKSTLLNKLTGTFSEVASYEFTTLTCIPGVITYRGAKIQLLDLPGIIEGAKDGKGRGRQVISTARTCNCILIVLDAIKPITHKRLIEKELEGFGIRLNKEPPNLTFRKKDKGGINLTSTVAVTHLDLDTVKAICGEYRMHNADITLRYDATADDLIDVIEGSRIYMPCIYAVNKIDSITLEELEILDKLPHYCPVSAHLEWNLDGLLDKIWEYLDLTRIYTKPKAMNPDYDDPVILSSKKRTVEDFCIRIHKDMLKQFKYALVWGSSAKHKPQRVGKEHELEDEDVVQIVKKI.

An OBG-type G domain is found at 66–291 (SRVGLVGFPS…LLDKIWEYLD (226 aa)). Residues 72 to 79 (GFPSVGKS), 118 to 122 (DLPGI), and 249 to 252 (NKID) each bind GTP. One can recognise a TGS domain in the interval 291–367 (DLTRIYTKPK…EDEDVVQIVK (77 aa)).

The protein belongs to the TRAFAC class OBG-HflX-like GTPase superfamily. OBG GTPase family.

In terms of biological role, binds GDP and GTP, and has low GTPase activity in vitro. The polypeptide is Developmentally-regulated G-protein 3 (DRG3) (Arabidopsis thaliana (Mouse-ear cress)).